A 307-amino-acid chain; its full sequence is Acyl transferase (307 aa).

Active-site charge relay system residues include Ser116, Asp213, and His243.

Belongs to the LuxD family.

It functions in the pathway lipid metabolism; fatty acid reduction for biolumincescence. In terms of biological role, acyl transferase is part of the fatty acid reductase system required for aldehyde biosynthesis; it produces fatty acids for the luminescent reaction. The chain is Acyl transferase from Photorhabdus luminescens (Xenorhabdus luminescens).